The chain runs to 167 residues: Probable phospholipid hydroperoxide glutathione peroxidase (167 aa).

Cys41 is a catalytic residue.

It belongs to the glutathione peroxidase family.

It localises to the cytoplasm. The enzyme catalyses a hydroperoxy polyunsaturated fatty acid + 2 glutathione = a hydroxy polyunsaturated fatty acid + glutathione disulfide + H2O. Functionally, protects cells and enzymes from oxidative damage, by catalyzing the reduction of hydrogen peroxide, lipid peroxides and organic hydroperoxide, by glutathione. The chain is Probable phospholipid hydroperoxide glutathione peroxidase (CSA) from Citrus sinensis (Sweet orange).